Reading from the N-terminus, the 889-residue chain is MSNPFAHLAEPLDPVQPGKKFFNLNKLEDSRYGRLPFSIRVLLEAAIRNCDEFLVKKQDIENILHWNVTQHKNIEVPFKPARVILQDFTGVPAVVDFAAMRDAVKKLGGDPEKINPVCPADLVIDHSIQVDFNRRADSLQKNQDLEFERNRERFEFLKWGSQAFHNMRIIPPGSGIIHQVNLEYLARVVFDQDGYYYPDSLVGTDSHTTMIDGLGILGWGVGGIEAEAVMLGQPISMVLPQVIGYRLMGKPHPLVTSTDIVLTITKHLRQVGVVGKFVEFFGPGVAQLSIADRATIANMCPEYGATAAFFPVDEVSITYLVQTGRDEEKLKYIKKYLQAVGMFRDFNDPSQDPDFTQVVELDLKTVVPCCSGPKRPQDKVAVSDMKKDFESCLGAKQGFKGFQVAPEHHNDHKTFIYDNTEFTLAHGSVVIAAITSCTNTSNPSVMLGAGLLAKKAVDAGLNVMPYIKTSLSPGSGVVTYYLQESGVMPYLSQLGFDVVGYGCMTCIGNSGPLPEPVVEAITQGDLVAVGVLSGNRNFEGRVHPNTRANYLASPPLVIAYAIAGTIRIDFEKEPLGVNAKGQQVFLKDIWPTRDEIQAVERQYVIPGMFKEVYQKIETVNESWNALATPSDKLFFWNSKSTYIKSPPFFENLTLDLQPPKSIVDAYVLLNLGDSVTTDHISPAGNIARNSPAARYLTNRGLTPREFNSYGSRRGNDAVMARGTFANIRLLNRFLNKQAPQTIHLPSGEILDVFDAAERYQQAGLPLIVLAGKEYGAGSSRDWAAKGPFLLGIKAVLAESYERIHRSNLVGMGVIPLEYLPGENADALGLTGQERYTIIIPENLKPQMKVQVKLDTGKTFQAVMRFDTDVELTYFLNGGILNYMIRKMAK.

Residues Gln-86 and 205–207 (DSH) contribute to the substrate site. Cys-437, Cys-503, and Cys-506 together coordinate [4Fe-4S] cluster. Substrate is bound by residues Arg-536 and Arg-541. Thr-628 is subject to Phosphothreonine. Substrate contacts are provided by residues Arg-699 and 779-780 (SR).

This sequence belongs to the aconitase/IPM isomerase family. As to quaternary structure, interacts (when associated with the 4Fe-4S) with FBXL5. Interacts with frataxin(81-210). [4Fe-4S] cluster is required as a cofactor.

It is found in the cytoplasm. The protein resides in the cytosol. It catalyses the reaction citrate = D-threo-isocitrate. Its function is as follows. Bifunctional iron sensor that switches between 2 activities depending on iron availability. Iron deprivation, promotes its mRNA binding activity through which it regulates the expression of genes involved in iron uptake, sequestration and utilization. Binds to iron-responsive elements (IRES) in the untranslated region of target mRNAs preventing for instance the translation of ferritin and aminolevulinic acid synthase and stabilizing the transferrin receptor mRNA. In terms of biological role, conversely, when cellular iron levels are high, binds a 4Fe-4S cluster which precludes RNA binding activity and promotes the aconitase activity, the isomerization of citrate to isocitrate via cis-aconitate. The sequence is that of Cytoplasmic aconitate hydratase (ACO1) from Homo sapiens (Human).